We begin with the raw amino-acid sequence, 127 residues long: Probable 4-amino-4-deoxy-L-arabinose-phosphoundecaprenol flippase subunit ArnF (127 aa).

Topologically, residues 1–2 (MG) are cytoplasmic. A helical membrane pass occupies residues 3 to 23 (LLFALGSVVLVSAAQLLLKWA). Residues 24–47 (MIQLPDISQLPQFLSSLSQFPLPT) lie on the Periplasmic side of the membrane. Residues 48–68 (AALFLGLLAYALSMLCWLLAL) form a helical membrane-spanning segment. At 69 to 76 (KRLPLSRA) the chain is on the cytoplasmic side. Residues 77–97 (YPLLSLSYLLVWLAALWLPGL) form a helical membrane-spanning segment. The Periplasmic segment spans residues 98–102 (NEVFR). A helical membrane pass occupies residues 103–123 (WGKLAGAGLIVSGLLLICWPA). Residues 124–127 (AKTR) lie on the Cytoplasmic side of the membrane.

It belongs to the ArnF family. In terms of assembly, heterodimer of ArnE and ArnF.

It is found in the cell inner membrane. Its pathway is bacterial outer membrane biogenesis; lipopolysaccharide biosynthesis. Translocates 4-amino-4-deoxy-L-arabinose-phosphoundecaprenol (alpha-L-Ara4N-phosphoundecaprenol) from the cytoplasmic to the periplasmic side of the inner membrane. The chain is Probable 4-amino-4-deoxy-L-arabinose-phosphoundecaprenol flippase subunit ArnF from Erwinia tasmaniensis (strain DSM 17950 / CFBP 7177 / CIP 109463 / NCPPB 4357 / Et1/99).